A 465-amino-acid polypeptide reads, in one-letter code: Ribosome biogenesis protein YTM1 (465 aa).

The tract at residues 18-99 (ARLRFSTRDE…ETTLDVEYVR (82 aa)) is ubiquitin-like (UBL) domain. WD repeat units lie at residues 111 to 153 (LHDD…IHTS), 160 to 198 (GHQS…KGIT), 205 to 242 (GHKG…SPAV), 277 to 317 (GHTA…LVDT), 319 to 358 (TTSH…TTVS), 364 to 404 (GHTN…TDTD), and 427 to 465 (GDGV…PKTA). The disordered stretch occupies residues 235-272 (KKSESPAVPQNLLPSSSARSSKRRKLNSSASTSQRGPL).

The protein belongs to the WD repeat WDR12/YTM1 family. In terms of assembly, component of the NOP7 complex, composed of ERB1, NOP7 and YTM1. The complex is held together by ERB1, which interacts with NOP7 via its N-terminal domain and with YTM1 via a high-affinity interaction between the seven-bladed beta-propeller domains of the 2 proteins. The NOP7 complex associates with the 66S pre-ribosome. Interacts (via UBL domain) with MDN1 (via VWFA/MIDAS domain).

The protein resides in the nucleus. Its subcellular location is the nucleolus. It localises to the nucleoplasm. Its function is as follows. Component of the NOP7 complex, which is required for maturation of the 25S and 5.8S ribosomal RNAs and formation of the 60S ribosome. The polypeptide is Ribosome biogenesis protein YTM1 (Coccidioides immitis (strain RS) (Valley fever fungus)).